The chain runs to 262 residues: Dehydrin COR410 (262 aa).

Disordered regions lie at residues 1–153 (MEDE…HDTD) and 187–262 (LPGG…KPSA). Basic and acidic residues-rich tracts occupy residues 34–45 (KKAEEDKEKEEE) and 53–74 (VSVE…KETL). Acidic residues predominate over residues 89–101 (SDEEEEEVIDDNG). 2 repeat units span residues 106 to 126 (RKKK…HKDT) and 173 to 193 (EEEK…GHKK). The tract at residues 106–245 (RKKKKGLKEK…MDKLPGYHKT (140 aa)) is 3 X 21 AA repeats, Lys-rich. Basic and acidic residues-rich tracts occupy residues 113-130 (KEKL…EGEH) and 187-196 (LPGGHKKPED). A compositionally biased stretch (low complexity) spans 197 to 209 (AAAVPVTHAAPAP). The stretch at 225–245 (AKEKKGLLGKIMDKLPGYHKT) is repeat 3. Residues 244–262 (KTGEEDKAAAATGEHKPSA) show a composition bias toward basic and acidic residues.

As to expression, expressed in roots, crown and leaves during cold acclimation.

The polypeptide is Dehydrin COR410 (COR410) (Triticum aestivum (Wheat)).